Consider the following 157-residue polypeptide: Endoribonuclease YbeY (157 aa).

The Zn(2+) site is built by His122, His126, and His132.

Belongs to the endoribonuclease YbeY family. Zn(2+) serves as cofactor.

The protein resides in the cytoplasm. In terms of biological role, single strand-specific metallo-endoribonuclease involved in late-stage 70S ribosome quality control and in maturation of the 3' terminus of the 16S rRNA. This chain is Endoribonuclease YbeY, found in Lysinibacillus sphaericus (strain C3-41).